A 627-amino-acid chain; its full sequence is Lactose permease (627 aa).

A permease region spans residues 1-460; the sequence is MKKKLVSRLS…AEIVDQLETQ (460 aa). 12 helical membrane passes run 13 to 33, 46 to 66, 84 to 104, 111 to 131, 159 to 179, 193 to 213, 244 to 264, 281 to 301, 309 to 329, 336 to 356, 392 to 412, and 419 to 439; these read AGAFGNDVFYATLSTYFIVFV, IFIITNLITAIRIGEVLLDPL, WVVGGGIISSLALLALFTDFG, PVVYLVIFGIVYLIMDIFYSF, VGSTIGANLVGVVITPIILFF, WFFFALIVAIVGILTSITVGL, LLWLAFAYWFYGLGINTLNAL, LLYTINTFVGLISASFFPSLA, LFYACIAVMLLGIGVFSVASG, VGAEFFFIPQPLAFLVVLMII, WFVSLIALTAGMTTGATASTI, and VFKLAMFALPAVMLLIAVSIF. One can recognise a PTS EIIA type-1 domain in the interval 493 to 597; it reads DPVFADKKLG…DDTVIVTVIN (105 aa). Residue His-545 is modified to Phosphohistidine; by HPr.

In the N-terminal section; belongs to the sodium:galactoside symporter (TC 2.A.2) family.

The protein localises to the cell membrane. Responsible for transport of beta-galactosides into the cell, with the concomitant uptake of protons (symport system), and also for transport of homologous and heterologous exchange of beta-galactosides. The sequence is that of Lactose permease (lacY) from Lactobacillus delbrueckii subsp. bulgaricus (strain ATCC 11842 / DSM 20081 / BCRC 10696 / JCM 1002 / NBRC 13953 / NCIMB 11778 / NCTC 12712 / WDCM 00102 / Lb 14).